The chain runs to 278 residues: Type II restriction enzyme AgeI (278 aa).

The protein belongs to the BsaWI type II restriction endonuclease family.

It carries out the reaction Endonucleolytic cleavage of DNA to give specific double-stranded fragments with terminal 5'-phosphates.. Its function is as follows. A P subtype restriction enzyme that recognizes the double-stranded sequence 5'-ACCGGT-3' and cleaves after A-1. This Thalassovita gelatinovora (Thalassobius gelatinovorus) protein is Type II restriction enzyme AgeI (ageIR).